Reading from the N-terminus, the 908-residue chain is Transcriptional repressor ILP1 (908 aa).

Disordered stretches follow at residues 1 to 113 (MGSN…PQAG) and 238 to 277 (VGPRPQKDDKKGVFDFGDENPTAKETTTSSIYEDEDEEDK). The segment covering 25 to 47 (ATPSSKPTSTLSSSKPKTLSASA) has biased composition (low complexity). Residues 426–453 (MQNKGSLIEEIEDQMKELNEKHALSILE) are a coiled coil. Over residues 513–530 (EFGRDENLQKRREVEQRA) the composition is skewed to basic and acidic residues. The segment at 513–574 (EFGRDENLQK…ESDTETSAYK (62 aa)) is disordered.

It belongs to the GCF family. Interacts with STIPL1/NTR1.

It localises to the nucleus. Functionally, transcriptional repressor regulating endoreduplication through control of A-type cyclins expression. Does not bind to promoter sequences (in vitro) and may act by interacting with tissue-specific transcription factors. Enhances the endocycle in endoreduplicating cells in seedlings. Required for efficient splicing. This is Transcriptional repressor ILP1 from Arabidopsis thaliana (Mouse-ear cress).